A 240-amino-acid polypeptide reads, in one-letter code: Probable transcriptional activator (240 aa).

Positions 17–28 are essential for the oxygen-regulated activity; it reads CTSCQARHGVVC. The 75-residue stretch at 158–232 folds into the HTH crp-type domain; sequence RTAEEKVASL…FRHIIVPDMD (75 aa). Positions 191-210 form a DNA-binding region, H-T-H motif; sequence RAEIADFLGLTIETVSRQMT.

Functionally, promotes the microaerobic and symbiotic induction of fixN, possibly by binding to the FNR consensus binding site upstream of fixN. This Rhizobium leguminosarum bv. viciae protein is Probable transcriptional activator (fnrN).